The following is a 591-amino-acid chain: A-type ATP synthase subunit A (591 aa).

233–240 (GPFGSGKT) lines the ATP pocket.

The protein belongs to the ATPase alpha/beta chains family. Has multiple subunits with at least A(3), B(3), C, D, E, F, H, I and proteolipid K(x).

It is found in the cell membrane. It carries out the reaction ATP + H2O + 4 H(+)(in) = ADP + phosphate + 5 H(+)(out). Its function is as follows. Component of the A-type ATP synthase that produces ATP from ADP in the presence of a proton gradient across the membrane. The A chain is the catalytic subunit. The protein is A-type ATP synthase subunit A of Metallosphaera sedula (strain ATCC 51363 / DSM 5348 / JCM 9185 / NBRC 15509 / TH2).